We begin with the raw amino-acid sequence, 121 residues long: Flagellar protein FliT (121 aa).

Residues 1-50 (MNHAPHLYFAWQQLVEKSQLMLRLATEEQWDELIASEMAYVNAVQEIAHL) form a required for homodimerization region. The tract at residues 60–98 (MQEQLRPMLRLILDNESKVKQLLQIRMDELAKLVGQSSV) is fliD binding.

The protein belongs to the FliT family. In terms of assembly, homodimer. Interacts with FliD and FlhC.

The protein resides in the cytoplasm. It localises to the cytosol. In terms of biological role, dual-function protein that regulates the transcription of class 2 flagellar operons and that also acts as an export chaperone for the filament-capping protein FliD. As a transcriptional regulator, acts as an anti-FlhDC factor; it directly binds FlhC, thus inhibiting the binding of the FlhC/FlhD complex to class 2 promoters, resulting in decreased expression of class 2 flagellar operons. As a chaperone, effects FliD transition to the membrane by preventing its premature polymerization, and by directing it to the export apparatus. This chain is Flagellar protein FliT, found in Escherichia coli (strain ATCC 8739 / DSM 1576 / NBRC 3972 / NCIMB 8545 / WDCM 00012 / Crooks).